Reading from the N-terminus, the 491-residue chain is Ribulose-1,5 bisphosphate carboxylase/oxygenase large subunit N-methyltransferase, chloroplastic (491 aa).

The SET domain maps to 67–291 (EGVVTTKTPV…AGDQLFIQYD (225 aa)).

Belongs to the class V-like SAM-binding methyltransferase superfamily. Plant protein-lysine LSMT methyltransferase family.

The protein resides in the plastid. It localises to the chloroplast. The enzyme catalyses L-lysyl-[ribulose-1,5-bisphosphate carboxylase] + 3 S-adenosyl-L-methionine = N(6),N(6),N(6)-trimethyl-L-lysyl-[ribulose-1,5-bisphosphate carboxylase] + 3 S-adenosyl-L-homocysteine + 3 H(+). Its function is as follows. Methylates 'Lys-14' of the large subunit of RuBisCO. The protein is Ribulose-1,5 bisphosphate carboxylase/oxygenase large subunit N-methyltransferase, chloroplastic (RBCMT) of Nicotiana tabacum (Common tobacco).